The primary structure comprises 332 residues: Ferredoxin--NADP reductase 2 (332 aa).

7 residues coordinate FAD: E37, Q45, Y50, V90, F124, D285, and T326.

The protein belongs to the ferredoxin--NADP reductase type 2 family. In terms of assembly, homodimer. The cofactor is FAD.

The enzyme catalyses 2 reduced [2Fe-2S]-[ferredoxin] + NADP(+) + H(+) = 2 oxidized [2Fe-2S]-[ferredoxin] + NADPH. This is Ferredoxin--NADP reductase 2 from Bacillus pumilus (strain SAFR-032).